The following is a 421-amino-acid chain: Adenylosuccinate synthetase (421 aa).

GTP-binding positions include 11–17 (GDEGKGK) and 39–41 (GHT). The Proton acceptor role is filled by D12. Mg(2+)-binding residues include D12 and G39. Residues 12-15 (DEGK), 37-40 (NAGH), T129, R143, N219, T234, and R298 contribute to the IMP site. H40 serves as the catalytic Proton donor. 294–300 (VTTGRRR) lines the substrate pocket. GTP is bound by residues R300, 326–328 (KLD), and 409–411 (GTG).

It belongs to the adenylosuccinate synthetase family. In terms of assembly, homodimer. It depends on Mg(2+) as a cofactor.

The protein resides in the cytoplasm. It carries out the reaction IMP + L-aspartate + GTP = N(6)-(1,2-dicarboxyethyl)-AMP + GDP + phosphate + 2 H(+). The protein operates within purine metabolism; AMP biosynthesis via de novo pathway; AMP from IMP: step 1/2. In terms of biological role, plays an important role in the de novo pathway and in the salvage pathway of purine nucleotide biosynthesis. Catalyzes the first committed step in the biosynthesis of AMP from IMP. The sequence is that of Adenylosuccinate synthetase from Paracoccidioides brasiliensis (strain Pb03).